A 345-amino-acid chain; its full sequence is Anthranilate phosphoribosyltransferase (345 aa).

5-phospho-alpha-D-ribose 1-diphosphate is bound by residues Gly-84, 87–88 (GD), Thr-92, 94–97 (NIST), 112–120 (KHGGRSVSS), and Ser-124. Gly-84 contributes to the anthranilate binding site. Ser-96 is a binding site for Mg(2+). Residue Arg-170 participates in anthranilate binding. Residues Asp-229 and Glu-230 each coordinate Mg(2+).

This sequence belongs to the anthranilate phosphoribosyltransferase family. In terms of assembly, homodimer. The cofactor is Mg(2+).

It catalyses the reaction N-(5-phospho-beta-D-ribosyl)anthranilate + diphosphate = 5-phospho-alpha-D-ribose 1-diphosphate + anthranilate. It functions in the pathway amino-acid biosynthesis; L-tryptophan biosynthesis; L-tryptophan from chorismate: step 2/5. Functionally, catalyzes the transfer of the phosphoribosyl group of 5-phosphorylribose-1-pyrophosphate (PRPP) to anthranilate to yield N-(5'-phosphoribosyl)-anthranilate (PRA). The protein is Anthranilate phosphoribosyltransferase of Herminiimonas arsenicoxydans.